Consider the following 277-residue polypeptide: MIKLGSHVSFKSPNYLYDSIKESIKNGANCAMIFLGAPQNTKRVDFEKYQYEKYLKDFSNLIKPEDIVVHAPYIINPASLEKADFAISFLSSEIKRMDKAKFKYLVLHPGFYGKNNVKDSLDQLARSIQKIFEITKDSNVEIMLETMSGKGSEVGKSYEEILYVIDKVKSPRLGACLDTCHVWDAGYNINDYQVFKDELIKTGILKHIKVIHLNDSKNELGSHKDRHANIDKGLIGLKNLKRIVHDPIFENIPIILETPWTEKGPIYDQEIAMLLEK.

Zn(2+) contacts are provided by histidine 70, histidine 108, glutamate 145, aspartate 178, histidine 181, histidine 212, aspartate 225, histidine 227, and glutamate 257.

The protein belongs to the AP endonuclease 2 family. Zn(2+) serves as cofactor.

The catalysed reaction is Endonucleolytic cleavage to 5'-phosphooligonucleotide end-products.. Its function is as follows. Endonuclease IV plays a role in DNA repair. It cleaves phosphodiester bonds at apurinic or apyrimidinic (AP) sites, generating a 3'-hydroxyl group and a 5'-terminal sugar phosphate. In Mycoplasmopsis pulmonis (strain UAB CTIP) (Mycoplasma pulmonis), this protein is Probable endonuclease 4.